A 241-amino-acid polypeptide reads, in one-letter code: MLENIRIVLIETSHSGNIGSAARAMKTMGLTQLCLVSPKSVDEQSYALSAGAENIVKNARVVDSFDEAVDDCSLVIGTSARLRHLQNTLIEPRECAEKVVAYKGKIAIVFGRERIGLTNEELLKCHYHLNIPANPDYSSLNLAMAVQLVSYELRMAFLVQNNKKNSLSLIEKNYPTTDQLAYFFDYTERIYQSLGFIQNQGVMRKLKRLYYRAKLEKNELNILNGMLSAVEKRIDLTKEDN.

S-adenosyl-L-methionine is bound by residues 78–80 (TSA), glycine 111, isoleucine 131, and 138–140 (SSL).

Belongs to the class IV-like SAM-binding methyltransferase superfamily. RNA methyltransferase TrmH family.

This is an uncharacterized protein from Haemophilus influenzae (strain ATCC 51907 / DSM 11121 / KW20 / Rd).